A 20-amino-acid chain; its full sequence is LSGKPAKXHLSVGEQAIAMT.

Residues 1–20 form a disordered region; sequence LSGKPAKXHLSVGEQAIAMT.

It belongs to the cytochrome c oxidase VIII family. In terms of assembly, component of the cytochrome c oxidase (complex IV, CIV), a multisubunit enzyme composed of 14 subunits. The complex is composed of a catalytic core of 3 subunits MT-CO1, MT-CO2 and MT-CO3, encoded in the mitochondrial DNA, and 11 supernumerary subunits COX4I, COX5A, COX5B, COX6A, COX6B, COX6C, COX7A, COX7B, COX7C, COX8 and NDUFA4, which are encoded in the nuclear genome. The complex exists as a monomer or a dimer and forms supercomplexes (SCs) in the inner mitochondrial membrane with NADH-ubiquinone oxidoreductase (complex I, CI) and ubiquinol-cytochrome c oxidoreductase (cytochrome b-c1 complex, complex III, CIII), resulting in different assemblies (supercomplex SCI(1)III(2)IV(1) and megacomplex MCI(2)III(2)IV(2)).

It localises to the mitochondrion inner membrane. The protein operates within energy metabolism; oxidative phosphorylation. Functionally, component of the cytochrome c oxidase, the last enzyme in the mitochondrial electron transport chain which drives oxidative phosphorylation. The respiratory chain contains 3 multisubunit complexes succinate dehydrogenase (complex II, CII), ubiquinol-cytochrome c oxidoreductase (cytochrome b-c1 complex, complex III, CIII) and cytochrome c oxidase (complex IV, CIV), that cooperate to transfer electrons derived from NADH and succinate to molecular oxygen, creating an electrochemical gradient over the inner membrane that drives transmembrane transport and the ATP synthase. Cytochrome c oxidase is the component of the respiratory chain that catalyzes the reduction of oxygen to water. Electrons originating from reduced cytochrome c in the intermembrane space (IMS) are transferred via the dinuclear copper A center (CU(A)) of subunit 2 and heme A of subunit 1 to the active site in subunit 1, a binuclear center (BNC) formed by heme A3 and copper B (CU(B)). The BNC reduces molecular oxygen to 2 water molecules using 4 electrons from cytochrome c in the IMS and 4 protons from the mitochondrial matrix. The sequence is that of Cytochrome c oxidase subunit 8B, mitochondrial from Oncorhynchus mykiss (Rainbow trout).